Reading from the N-terminus, the 420-residue chain is Tyrosine--tRNA ligase (420 aa).

Position 36 (Tyr-36) interacts with L-tyrosine. The 'HIGH' region motif lies at 41-50 (PTADSLHIGH). Tyr-170 and Gln-174 together coordinate L-tyrosine. The 'KMSKS' region signature appears at 231-235 (KFGKS). Lys-234 is a binding site for ATP. The 68-residue stretch at 353-420 (SNIIDVLIET…KKKYFMVNYK (68 aa)) folds into the S4 RNA-binding domain.

The protein belongs to the class-I aminoacyl-tRNA synthetase family. TyrS type 1 subfamily. Homodimer.

It localises to the cytoplasm. It catalyses the reaction tRNA(Tyr) + L-tyrosine + ATP = L-tyrosyl-tRNA(Tyr) + AMP + diphosphate + H(+). Its function is as follows. Catalyzes the attachment of tyrosine to tRNA(Tyr) in a two-step reaction: tyrosine is first activated by ATP to form Tyr-AMP and then transferred to the acceptor end of tRNA(Tyr). This is Tyrosine--tRNA ligase from Staphylococcus haemolyticus (strain JCSC1435).